A 352-amino-acid polypeptide reads, in one-letter code: Sperm equatorial segment protein 1 (352 aa).

The N-terminal stretch at 1-19 (MKSLVLLVALLLWSSSVPA) is a signal peptide. A glycan (N-linked (GlcNAc...) asparagine) is linked at Asn-128. The tract at residues 140–203 (IEKEEPEPEP…TESEDVPQLS (64 aa)) is disordered. Positions 166 to 193 (TESSTSPYVTSYKSPVTTSDRSTGIEIS) are enriched in polar residues.

The protein belongs to the SPESP1 family. In terms of processing, glycosylated. In testis there are two predominant forms of 77- and 67-kDa and a form of 47-kDa, whereas in epididymal sperm from caput, corpus, and cauda there are two forms of 47- and 43-kDa. Testis forms contain complex carbohydrate residues. Epididymal sperm forms are N-glycosylated. Then undergoes significant glycosylation in the testis and that the majority of these glycoconjugates are removed by the time sperm reach the caput epididymis.

It localises to the cytoplasmic vesicle. Its subcellular location is the secretory vesicle. It is found in the acrosome. Its function is as follows. Involved in fertilization ability of sperm. In Macaca fascicularis (Crab-eating macaque), this protein is Sperm equatorial segment protein 1.